The following is a 236-amino-acid chain: MAATLLDVCAVVPAAGFGRRMQTECPKQYLSIGNKTILEHSVHALLAHPRVTRVVIAISPGDHRFAQLPLANHPQITVVDGGNERADSVLAGLQAVAKAQWVLVHDAARPCLHQDDLARLLAISENSRVGGILASPVRDTMKRGEPGKTAIAHTVERADLWHALTPQFFPRELLHDCLTRALNEGAIITDEASALEYCGFHPALVEGRADNIKVTRPEDLALAEFYLTRTIHQEKA.

The protein belongs to the IspD/TarI cytidylyltransferase family. IspD subfamily. In terms of assembly, homodimer.

It catalyses the reaction 2-C-methyl-D-erythritol 4-phosphate + CTP + H(+) = 4-CDP-2-C-methyl-D-erythritol + diphosphate. Its pathway is isoprenoid biosynthesis; isopentenyl diphosphate biosynthesis via DXP pathway; isopentenyl diphosphate from 1-deoxy-D-xylulose 5-phosphate: step 2/6. In terms of biological role, catalyzes the formation of 4-diphosphocytidyl-2-C-methyl-D-erythritol from CTP and 2-C-methyl-D-erythritol 4-phosphate (MEP). This chain is 2-C-methyl-D-erythritol 4-phosphate cytidylyltransferase, found in Salmonella paratyphi A (strain ATCC 9150 / SARB42).